The following is a 103-amino-acid chain: Putative glutaredoxin-C12 (103 aa).

Residues 1 to 102 (MERVRDLASE…QMLKASNAIW (102 aa)) enclose the Glutaredoxin domain. Cysteines 21 and 24 form a disulfide.

The protein belongs to the glutaredoxin family. CC-type subfamily.

It localises to the cytoplasm. Its function is as follows. Has a glutathione-disulfide oxidoreductase activity in the presence of NADPH and glutathione reductase. Reduces low molecular weight disulfides and proteins. This Arabidopsis thaliana (Mouse-ear cress) protein is Putative glutaredoxin-C12 (GRXC12).